The sequence spans 404 residues: uncharacterized protein (404 aa).

11 helical membrane-spanning segments follow: residues 15–35 (WSLLMGAAFLMATSAIGPGFL), 43–63 (NTLAASFGFVILISIILDIFA), 84–104 (MVLPGLGYFIAILVVLGGLAF), 121–141 (GITPETGALISAVIAILIFVI), 154–174 (IAGFVMIILTVYVAATTAPPV), 187–207 (ISIFAIVTLVGGTVGGYITFA), 231–251 (VVGILITSVMRIALFLAVLGV), 279–299 (IFGLIMWSAAITSVIGAAYTS), 316–336 (GIIIGFIVVSTLAFVTIGQPA), 338–358 (ILVLVGSLNGLILPIALGTLL), and 373–393 (PLWLTSTGALVVIVMAVMGIY).

Belongs to the NRAMP family.

It is found in the cell membrane. This is an uncharacterized protein from Bacillus subtilis (strain 168).